We begin with the raw amino-acid sequence, 1792 residues long: BTB/POZ domain-containing protein 8 (1792 aa).

BTB domains follow at residues 58-127 and 206-273; these read TDVT…NIKN and PDID…DIPD. 8 disordered regions span residues 528–554, 581–658, 670–692, 707–768, 788–815, 831–989, 1151–1283, and 1519–1607; these read DKGDDRRLGKKPIFSSSQQRKQVSDSG, SDGL…PRQV, TGQKNLLNGKGVRNQEGQISGAR, KPLK…CDSP, SRPVSRVTNGTSNKKSIHEQDTNVNNSV, AILK…KPHK, ERTN…SNDR, and SIDS…KSLD. Composition is skewed to polar residues over residues 541 to 552 and 588 to 601; these read FSSSQQRKQVSD and GHSSSTNRNSINKT. Basic and acidic residues-rich tracts occupy residues 602–625 and 640–650; these read LKQDDVKEKDGTKIASKITKELKT and SKTENGDKARL. Residues 724–740 are compositionally biased toward polar residues; that stretch reads GPSSRSTDSSMEFSIST. Over residues 744 to 758 the composition is skewed to basic and acidic residues; that stretch reads DEPKENGSTEEEKPS. Over residues 838 to 865 the composition is skewed to polar residues; sequence TSNGCTAAQQRTKSTPSNLTKTQGSQGE. Residues 866–877 show a composition bias toward low complexity; the sequence is SPNSVKSSVSSR. Composition is skewed to basic and acidic residues over residues 878–891 and 927–939; these read QSDENVAKLDHNTT and KKGETLNNKDSKQ. Positions 947–956 are enriched in polar residues; it reads ISKTQPSSQR. The span at 969–987 shows a compositional bias: basic and acidic residues; the sequence is MFHDVRDNNNKDSVSEQKP. Composition is skewed to polar residues over residues 1151–1160 and 1195–1215; these read ERTNGTLNSA and SDVSSKCFSGQLSEKNSPKNM. Residues 1250–1259 show a composition bias toward low complexity; the sequence is SDTGSATTSS. A compositionally biased stretch (basic and acidic residues) spans 1566-1594; sequence IQQRSKFLDSDVKSQERPCHLDLHQREPN. Over residues 1597 to 1607 the composition is skewed to polar residues; it reads IPKNSSTKSLD.

Interacts (via N-terminus) with adapter protein complex AP-2 subunits alpha (AP2A1) and beta (AP2B1). As to expression, highly expressed in fetal brain. Weakly expressed in adult brain and prostate.

The protein resides in the cell projection. It is found in the axon. It localises to the presynapse. The protein localises to the cytoplasmic vesicle. Its subcellular location is the clathrin-coated vesicle. The protein resides in the nucleus. Its function is as follows. Involved in clathrin-mediated endocytosis at the synapse. Plays a role in neuronal development and in synaptic vesicle recycling in mature neurons, a process required for normal synaptic transmission. This Homo sapiens (Human) protein is BTB/POZ domain-containing protein 8.